Reading from the N-terminus, the 316-residue chain is Pantothenate kinase (316 aa).

ATP is bound at residue 95-102 (GSVAVGKS).

This sequence belongs to the prokaryotic pantothenate kinase family.

It localises to the cytoplasm. The enzyme catalyses (R)-pantothenate + ATP = (R)-4'-phosphopantothenate + ADP + H(+). Its pathway is cofactor biosynthesis; coenzyme A biosynthesis; CoA from (R)-pantothenate: step 1/5. In Shewanella sediminis (strain HAW-EB3), this protein is Pantothenate kinase.